A 352-amino-acid polypeptide reads, in one-letter code: Sodium-lithium/proton antiporter (352 aa).

Transmembrane regions (helical) follow at residues 11–31 (ILLLLGILFVVAGYFILPVSV), 32–52 (PLIIALITALFLNPAVRWMQF), 61–81 (AVTIVFLLFVIMIGLLGTYAV), 159–179 (IPEYLISFLVYLIALFLFMLE), 216–236 (AQFLVSIVIFVVCLIGLFWIT), 241–261 (IVMSLIIWIVDFVPIIGSIVI), 271–291 (IVGDIAMGGQLAMLAIILLAI), and 317–337 (IGLQLIGLMGFILGPLLVIAF).

The protein belongs to the autoinducer-2 exporter (AI-2E) (TC 2.A.86) family.

The protein resides in the cell membrane. Catalyzes the pH-dependent efflux of sodium and lithium in exchange for external protons. The chain is Sodium-lithium/proton antiporter from Halobacillus andaensis.